We begin with the raw amino-acid sequence, 118 residues long: Lutropin subunit beta (118 aa).

Disulfide bonds link cysteine 9–cysteine 57, cysteine 23–cysteine 72, cysteine 26–cysteine 110, cysteine 34–cysteine 88, cysteine 38–cysteine 90, and cysteine 93–cysteine 100. A glycan (N-linked (GlcNAc...) asparagine) is linked at asparagine 13.

This sequence belongs to the glycoprotein hormones subunit beta family. Heterodimer of a common alpha chain and a unique beta chain which confers biological specificity to thyrotropin, lutropin, follitropin and gonadotropin.

It is found in the secreted. In terms of biological role, promotes spermatogenesis and ovulation by stimulating the testes and ovaries to synthesize steroids. The chain is Lutropin subunit beta (LHB) from Balaenoptera acutorostrata (Common minke whale).